Here is a 111-residue protein sequence, read N- to C-terminus: uncharacterized protein (111 aa).

The protein resides in the cytoplasm. The protein localises to the nucleus. This is an uncharacterized protein from Saccharomyces cerevisiae (strain ATCC 204508 / S288c) (Baker's yeast).